Reading from the N-terminus, the 673-residue chain is DNA ligase (673 aa).

NAD(+) is bound by residues 35–39 (DADYD), 84–85 (SL), and E115. The N6-AMP-lysine intermediate role is filled by K117. The NAD(+) site is built by R138, E180, K296, and K320. Residues C415, C418, C433, and C438 each contribute to the Zn(2+) site. In terms of domain architecture, BRCT spans 595 to 673 (ERGTALAGQT…EDALKKLLGK (79 aa)).

This sequence belongs to the NAD-dependent DNA ligase family. LigA subfamily. Mg(2+) serves as cofactor. The cofactor is Mn(2+).

The enzyme catalyses NAD(+) + (deoxyribonucleotide)n-3'-hydroxyl + 5'-phospho-(deoxyribonucleotide)m = (deoxyribonucleotide)n+m + AMP + beta-nicotinamide D-nucleotide.. DNA ligase that catalyzes the formation of phosphodiester linkages between 5'-phosphoryl and 3'-hydroxyl groups in double-stranded DNA using NAD as a coenzyme and as the energy source for the reaction. It is essential for DNA replication and repair of damaged DNA. In Koribacter versatilis (strain Ellin345), this protein is DNA ligase.